The sequence spans 444 residues: EMI domain-containing protein 1 (444 aa).

The first 22 residues, 1–22 (MGGPRAWTLLCLGLLLPGGGAA), serve as a signal peptide directing secretion. Positions 33–106 (RRNWCSYVVT…PGHSGVTCEE (74 aa)) constitute an EMI domain. Cystine bridges form between Cys-37–Cys-96, Cys-62–Cys-68, and Cys-95–Cys-104. A glycan (O-linked (Fuc) threonine) is linked at Thr-42. N-linked (GlcNAc...) asparagine glycosylation occurs at Asn-51. A glycan (N-linked (GlcNAc...) asparagine) is linked at Asn-136. 2 disordered regions span residues 161 to 374 (EQTV…KSHW) and 404 to 444 (PDLG…SERS). The region spanning 221 to 371 (GPPGPQGPPG…PGPKGDPGEK (151 aa)) is the Collagen-like domain. The segment covering 222–231 (PPGPQGPPGR) has biased composition (pro residues). The span at 232–243 (PGQTGAAGTPGK) shows a compositional bias: low complexity. Pro residues-rich tracts occupy residues 244-264 (MGPP…PVGP) and 292-311 (PTGP…PGLP).

Homo- or heteromers. O-fucosylated at Thr-42 within the EMI domain by FUT10/POFUT3 and FUT11/POFUT4.

The protein localises to the secreted. Its subcellular location is the extracellular space. It localises to the extracellular matrix. In Mus musculus (Mouse), this protein is EMI domain-containing protein 1 (Emid1).